Consider the following 478-residue polypeptide: PRAME family member 15 (478 aa).

The LRR 1; degenerate repeat unit spans residues 99–126 (RWKLQVLDLQDVCENFWMVWSEAMAHGC). Residues 181–205 (HLCCKKLKILGMPFRNIRSILKMVN) form an LRR 2; degenerate repeat. The stretch at 206–232 (LDCIQEVEVNCKWVLPILTQFTPYLGH) is one LRR 3; degenerate repeat. One copy of the LRR 4; degenerate repeat lies at 233 to 268 (MRNLQKLVLSHMDVSRYVSPEQKKEIVTQFTTQFLK). LRR repeat units follow at residues 269 to 294 (LRCLQKLYMNSVSFLEGHLDQLLSCL), 295 to 326 (KTSLKVLTITNCVLLESDLKHLSQCPSISQLK), 327 to 347 (TLDLSGIRLTNYSLVPLQILL), 351 to 378 (AATLEYLDLDDCGIIDSQVNAILPALSR), and 379 to 403 (CFELNTFSFCGNPICMATLENLLSH).

The protein belongs to the PRAME family.

This chain is PRAME family member 15, found in Homo sapiens (Human).